We begin with the raw amino-acid sequence, 354 residues long: Uroporphyrinogen decarboxylase (354 aa).

Substrate is bound by residues 27–31, F46, D77, Y153, T208, and H326; that span reads RQAGR.

Belongs to the uroporphyrinogen decarboxylase family. In terms of assembly, homodimer.

The protein localises to the cytoplasm. It catalyses the reaction uroporphyrinogen III + 4 H(+) = coproporphyrinogen III + 4 CO2. It functions in the pathway porphyrin-containing compound metabolism; protoporphyrin-IX biosynthesis; coproporphyrinogen-III from 5-aminolevulinate: step 4/4. Its function is as follows. Catalyzes the decarboxylation of four acetate groups of uroporphyrinogen-III to yield coproporphyrinogen-III. The protein is Uroporphyrinogen decarboxylase of Neisseria meningitidis serogroup A / serotype 4A (strain DSM 15465 / Z2491).